Consider the following 341-residue polypeptide: Methionine import ATP-binding protein MetN 3 (341 aa).

Residues 2–241 form the ABC transporter domain; it reads IEFQNVTKTF…PSHETTKRFI (240 aa). 38 to 45 serves as a coordination point for ATP; sequence GFSGAGKS.

It belongs to the ABC transporter superfamily. Methionine importer (TC 3.A.1.24) family. The complex is composed of two ATP-binding proteins (MetN), two transmembrane proteins (MetI) and a solute-binding protein (MetQ).

Its subcellular location is the cell membrane. It carries out the reaction L-methionine(out) + ATP + H2O = L-methionine(in) + ADP + phosphate + H(+). The enzyme catalyses D-methionine(out) + ATP + H2O = D-methionine(in) + ADP + phosphate + H(+). Its function is as follows. Part of the ABC transporter complex MetNIQ involved in methionine import. Responsible for energy coupling to the transport system. This chain is Methionine import ATP-binding protein MetN 3, found in Oceanobacillus iheyensis (strain DSM 14371 / CIP 107618 / JCM 11309 / KCTC 3954 / HTE831).